Here is a 303-residue protein sequence, read N- to C-terminus: Vacuolar protein sorting-associated protein 26B (303 aa).

Belongs to the VPS26 family. In terms of assembly, component of the retromer complex which consists of VPS29 (MAG1), VPS26 (VPS26A or VPS26B), VPS35 (VPS35A or VPS35B or VPS35C), VPS5/17 (SNX1 or SNX2A or SNX2B). Component of a retromer subcomplex consisting of VPS29 (MAG1), VPS26 (VPS26A or VPS26B), VPS35 (VPS35A or VPS35B or VPS35C).

The protein resides in the cytoplasm. Its subcellular location is the endosome membrane. It is found in the prevacuolar compartment membrane. The protein localises to the golgi apparatus. It localises to the trans-Golgi network membrane. Its function is as follows. Plays a role in vesicular protein sorting. Component of the membrane-associated retromer complex which is essential in endosome-to-Golgi retrograde transport. The VPS29-VPS26-VPS35 subcomplex may be involved in recycling of specific cargos from endosome to the plasma membrane. The chain is Vacuolar protein sorting-associated protein 26B (VPS26B) from Arabidopsis thaliana (Mouse-ear cress).